A 216-amino-acid polypeptide reads, in one-letter code: ATP-dependent Clp protease proteolytic subunit (216 aa).

The active-site Nucleophile is Ser120. His145 is an active-site residue.

It belongs to the peptidase S14 family. As to quaternary structure, fourteen ClpP subunits assemble into 2 heptameric rings which stack back to back to give a disk-like structure with a central cavity, resembling the structure of eukaryotic proteasomes.

Its subcellular location is the cytoplasm. It carries out the reaction Hydrolysis of proteins to small peptides in the presence of ATP and magnesium. alpha-casein is the usual test substrate. In the absence of ATP, only oligopeptides shorter than five residues are hydrolyzed (such as succinyl-Leu-Tyr-|-NHMec, and Leu-Tyr-Leu-|-Tyr-Trp, in which cleavage of the -Tyr-|-Leu- and -Tyr-|-Trp bonds also occurs).. In terms of biological role, cleaves peptides in various proteins in a process that requires ATP hydrolysis. Has a chymotrypsin-like activity. Plays a major role in the degradation of misfolded proteins. In Cupriavidus necator (strain ATCC 17699 / DSM 428 / KCTC 22496 / NCIMB 10442 / H16 / Stanier 337) (Ralstonia eutropha), this protein is ATP-dependent Clp protease proteolytic subunit.